A 415-amino-acid polypeptide reads, in one-letter code: Pectin acetylesterase 12 (415 aa).

The first 20 residues, 1-20 (MVKLLLVGFVVAGIILGTQA), serve as a signal peptide directing secretion. An N-linked (GlcNAc...) asparagine glycan is attached at N27. Catalysis depends on charge relay system residues S197, D293, and H360.

This sequence belongs to the pectinacetylesterase family.

Its subcellular location is the secreted. The protein resides in the cell wall. Functionally, hydrolyzes acetyl esters in homogalacturonan regions of pectin. In type I primary cell wall, galacturonic acid residues of pectin can be acetylated at the O-2 and O-3 positions. Decreasing the degree of acetylation of pectin gels in vitro alters their physical properties. The polypeptide is Pectin acetylesterase 12 (Arabidopsis thaliana (Mouse-ear cress)).